A 345-amino-acid polypeptide reads, in one-letter code: L-threonine 3-dehydrogenase (345 aa).

C42 contributes to the Zn(2+) binding site. Catalysis depends on charge relay system residues T44 and H47. Zn(2+) contacts are provided by H67, E68, C97, C100, C103, and C111. Residues I179, D199, R204, 266-268, and 290-291 contribute to the NAD(+) site; these read LGI and IY.

The protein belongs to the zinc-containing alcohol dehydrogenase family. In terms of assembly, homotetramer. Zn(2+) serves as cofactor.

It is found in the cytoplasm. It catalyses the reaction L-threonine + NAD(+) = (2S)-2-amino-3-oxobutanoate + NADH + H(+). It functions in the pathway amino-acid degradation; L-threonine degradation via oxydo-reductase pathway; glycine from L-threonine: step 1/2. Its function is as follows. Catalyzes the NAD(+)-dependent oxidation of L-threonine to 2-amino-3-ketobutyrate. This is L-threonine 3-dehydrogenase from Rhizobium rhizogenes (strain K84 / ATCC BAA-868) (Agrobacterium radiobacter).